Here is a 162-residue protein sequence, read N- to C-terminus: NADH-quinone oxidoreductase subunit I (162 aa).

4Fe-4S ferredoxin-type domains are found at residues 52-82 (LRRY…IEAG) and 93-122 (TRYD…EGPN). [4Fe-4S] cluster-binding residues include Cys-62, Cys-65, Cys-68, Cys-72, Cys-102, Cys-105, Cys-108, and Cys-112.

This sequence belongs to the complex I 23 kDa subunit family. As to quaternary structure, NDH-1 is composed of 14 different subunits. Subunits NuoA, H, J, K, L, M, N constitute the membrane sector of the complex. The cofactor is [4Fe-4S] cluster.

It is found in the cell inner membrane. The catalysed reaction is a quinone + NADH + 5 H(+)(in) = a quinol + NAD(+) + 4 H(+)(out). Its function is as follows. NDH-1 shuttles electrons from NADH, via FMN and iron-sulfur (Fe-S) centers, to quinones in the respiratory chain. The immediate electron acceptor for the enzyme in this species is believed to be ubiquinone. Couples the redox reaction to proton translocation (for every two electrons transferred, four hydrogen ions are translocated across the cytoplasmic membrane), and thus conserves the redox energy in a proton gradient. This is NADH-quinone oxidoreductase subunit I from Methylobacterium radiotolerans (strain ATCC 27329 / DSM 1819 / JCM 2831 / NBRC 15690 / NCIMB 10815 / 0-1).